The following is a 348-amino-acid chain: Putative S-adenosyl-L-methionine-dependent methyltransferase MRA_3439 (348 aa).

S-adenosyl-L-methionine contacts are provided by residues Asp171 and 200–201 (DL).

Belongs to the UPF0677 family.

Exhibits S-adenosyl-L-methionine-dependent methyltransferase activity. The sequence is that of Putative S-adenosyl-L-methionine-dependent methyltransferase MRA_3439 from Mycobacterium tuberculosis (strain ATCC 25177 / H37Ra).